Consider the following 840-residue polypeptide: Probable alpha-glucuronidase A (840 aa).

Positions Met-1 to Ala-19 are cleaved as a signal peptide. Residues Asn-222, Asn-310, Asn-465, Asn-527, Asn-576, Asn-682, and Asn-732 are each glycosylated (N-linked (GlcNAc...) asparagine).

This sequence belongs to the glycosyl hydrolase 67 family.

It is found in the secreted. The enzyme catalyses an alpha-D-glucuronoside + H2O = D-glucuronate + an alcohol. Its function is as follows. Alpha-glucuronidase involved in the hydrolysis of xylan, a major structural heterogeneous polysaccharide found in plant biomass representing the second most abundant polysaccharide in the biosphere, after cellulose. Releases 4-O-methylglucuronic acid from xylan. This Aspergillus clavatus (strain ATCC 1007 / CBS 513.65 / DSM 816 / NCTC 3887 / NRRL 1 / QM 1276 / 107) protein is Probable alpha-glucuronidase A (aguA).